The following is a 130-amino-acid chain: uncharacterized protein (130 aa).

Positions 1–28 (MELAKERNGPHQKHHGQCQNHCTSPNTV) are disordered. Residues 17–28 (QCQNHCTSPNTV) are compositionally biased toward polar residues.

This is an uncharacterized protein from Saccharomyces cerevisiae (strain ATCC 204508 / S288c) (Baker's yeast).